Reading from the N-terminus, the 298-residue chain is Protoheme IX farnesyltransferase (298 aa).

8 helical membrane passes run 24–44 (VVSL…PAWP), 46–66 (WTTI…AAAF), 97–117 (LVFA…VVNP), 118–138 (LTMW…TVLL), 146–166 (IVIG…AATG), 172–192 (ALLL…ALAL), 231–251 (LLPV…VLLG), and 278–298 (IWYL…PIPV).

This sequence belongs to the UbiA prenyltransferase family. Protoheme IX farnesyltransferase subfamily.

The protein resides in the cell inner membrane. The catalysed reaction is heme b + (2E,6E)-farnesyl diphosphate + H2O = Fe(II)-heme o + diphosphate. The protein operates within porphyrin-containing compound metabolism; heme O biosynthesis; heme O from protoheme: step 1/1. Converts heme B (protoheme IX) to heme O by substitution of the vinyl group on carbon 2 of heme B porphyrin ring with a hydroxyethyl farnesyl side group. The chain is Protoheme IX farnesyltransferase from Thiobacillus denitrificans (strain ATCC 25259 / T1).